Reading from the N-terminus, the 334-residue chain is Cathepsin L2 (334 aa).

A signal peptide spans 1–17 (MNLSLVLAAFCLGIASA). Residues 18–113 (VPKFDQNLDT…KVFREPLFLD (96 aa)) constitute a propeptide, activation peptide. Cystine bridges form between C135–C178 and C169–C211. The active site involves C138. The N-linked (GlcNAc...) asparagine glycan is linked to N221. Residues C270 and C323 are joined by a disulfide bond. The active site involves H277. N292 is a glycosylation site (N-linked (GlcNAc...) asparagine). Residue N301 is part of the active site.

It belongs to the peptidase C1 family. As to expression, predominantly expressed in the thymus and testis. Also expressed in corneal epithelium, and to a lesser extent in conjunctival epithelium and skin.

It is found in the lysosome. It catalyses the reaction The recombinant enzyme hydrolyzes proteins (serum albumin, collagen) and synthetic substrates (Z-Phe-Arg-NHMec &gt; Z-Leu-Arg-NHMec &gt; Z-Val-Arg-NHMec).. Inhibited by CST6. In terms of biological role, cysteine protease. May have an important role in corneal physiology. The polypeptide is Cathepsin L2 (CTSV) (Homo sapiens (Human)).